The primary structure comprises 484 residues: 6-phosphogluconate dehydrogenase, decarboxylating (484 aa).

Residues glycine 11–glycine 16, asparagine 34–threonine 36, valine 76–alanine 78, and asparagine 104 contribute to the NADP(+) site. Substrate is bound by residues asparagine 104 and serine 130 to glycine 132. Residue lysine 185 is the Proton acceptor of the active site. Histidine 188–asparagine 189 contributes to the substrate binding site. Glutamate 192 (proton donor) is an active-site residue. Substrate is bound by residues tyrosine 193, lysine 262, arginine 289, arginine 447, and histidine 453.

It belongs to the 6-phosphogluconate dehydrogenase family. As to quaternary structure, homodimer.

It catalyses the reaction 6-phospho-D-gluconate + NADP(+) = D-ribulose 5-phosphate + CO2 + NADPH. The protein operates within carbohydrate degradation; pentose phosphate pathway; D-ribulose 5-phosphate from D-glucose 6-phosphate (oxidative stage): step 3/3. Functionally, catalyzes the oxidative decarboxylation of 6-phosphogluconate to ribulose 5-phosphate and CO(2), with concomitant reduction of NADP to NADPH. This chain is 6-phosphogluconate dehydrogenase, decarboxylating, found in Aggregatibacter actinomycetemcomitans (Actinobacillus actinomycetemcomitans).